We begin with the raw amino-acid sequence, 226 residues long: 2-C-methyl-D-erythritol 4-phosphate cytidylyltransferase (226 aa).

The protein belongs to the IspD/TarI cytidylyltransferase family. IspD subfamily.

It catalyses the reaction 2-C-methyl-D-erythritol 4-phosphate + CTP + H(+) = 4-CDP-2-C-methyl-D-erythritol + diphosphate. Its pathway is isoprenoid biosynthesis; isopentenyl diphosphate biosynthesis via DXP pathway; isopentenyl diphosphate from 1-deoxy-D-xylulose 5-phosphate: step 2/6. Functionally, catalyzes the formation of 4-diphosphocytidyl-2-C-methyl-D-erythritol from CTP and 2-C-methyl-D-erythritol 4-phosphate (MEP). The chain is 2-C-methyl-D-erythritol 4-phosphate cytidylyltransferase from Bacillus cytotoxicus (strain DSM 22905 / CIP 110041 / 391-98 / NVH 391-98).